We begin with the raw amino-acid sequence, 158 residues long: NAD(P)H-quinone oxidoreductase subunit J, chloroplastic (158 aa).

Belongs to the complex I 30 kDa subunit family. As to quaternary structure, NDH is composed of at least 16 different subunits, 5 of which are encoded in the nucleus.

Its subcellular location is the plastid. The protein resides in the chloroplast thylakoid membrane. The enzyme catalyses a plastoquinone + NADH + (n+1) H(+)(in) = a plastoquinol + NAD(+) + n H(+)(out). It carries out the reaction a plastoquinone + NADPH + (n+1) H(+)(in) = a plastoquinol + NADP(+) + n H(+)(out). Functionally, NDH shuttles electrons from NAD(P)H:plastoquinone, via FMN and iron-sulfur (Fe-S) centers, to quinones in the photosynthetic chain and possibly in a chloroplast respiratory chain. The immediate electron acceptor for the enzyme in this species is believed to be plastoquinone. Couples the redox reaction to proton translocation, and thus conserves the redox energy in a proton gradient. This Lemna minor (Common duckweed) protein is NAD(P)H-quinone oxidoreductase subunit J, chloroplastic.